The sequence spans 1025 residues: Dihydropyrimidine dehydrogenase [NADP(+)] (1025 aa).

Residues 69–100 enclose the 4Fe-4S ferredoxin-type 1 domain; it reads ERGALREAMRCLKCADAPCQKSCPTNLDIKSF. The [4Fe-4S] cluster site is built by Cys79, Cys82, Cys87, and Cys91. Val129 is a binding site for FAD. 4 residues coordinate [4Fe-4S] cluster: Cys130, Cys136, Cys140, and Gln156. FAD is bound by residues 194–198, 218–226, Arg235, and Leu261; these read GAGPA and EKQEYVGGI. NADP(+)-binding positions include 340–343, 364–365, and Arg371; these read AGDT and RK. Lys384 is modified (N6-acetyllysine). NADP(+) is bound by residues 437 to 439 and 481 to 487; these read AFG and DVVGIAN. 480 to 489 contacts FAD; it reads GDVVGIANTT. FMN contacts are provided by residues Ser550 and 574 to 575; that span reads KT. Residues Asn609 and 668-670 contribute to the substrate site; that span reads NLS. Cys671 (proton acceptor) is an active-site residue. FMN is bound at residue Lys709. Position 736–737 (736–737) interacts with substrate; that stretch reads NT. Residues Gly767, 793 to 795, and 816 to 817 each bind FMN; these read TGG and CS. 4Fe-4S ferredoxin-type domains lie at 944 to 976 and 978 to 1007; these read VVAV…FDPE and HLPT…MVSR. [4Fe-4S] cluster-binding residues include Cys953, Cys956, Cys959, Cys963, Cys986, Cys989, Cys992, and Cys996.

The protein belongs to the dihydropyrimidine dehydrogenase family. As to quaternary structure, homodimer. FAD is required as a cofactor. FMN serves as cofactor. The cofactor is [4Fe-4S] cluster.

Its subcellular location is the cytoplasm. The catalysed reaction is 5,6-dihydrouracil + NADP(+) = uracil + NADPH + H(+). It catalyses the reaction 5,6-dihydrothymine + NADP(+) = thymine + NADPH + H(+). Its pathway is amino-acid biosynthesis; beta-alanine biosynthesis. Inactivated by 5-iodouracil. Functionally, involved in pyrimidine base degradation. Catalyzes the reduction of uracil and thymine. Also involved the degradation of the chemotherapeutic drug 5-fluorouracil. The protein is Dihydropyrimidine dehydrogenase [NADP(+)] (DPYD) of Bos taurus (Bovine).